Here is a 106-residue protein sequence, read N- to C-terminus: UPF0145 protein PSEEN3024 (106 aa).

The protein belongs to the UPF0145 family.

The protein is UPF0145 protein PSEEN3024 of Pseudomonas entomophila (strain L48).